Reading from the N-terminus, the 397-residue chain is Methylthioribose kinase (397 aa).

ATP-binding positions include Asn44, Lys61, and 115-117; that span reads EDL. Asp233 contacts substrate. An ATP-binding site is contributed by 250 to 252; that stretch reads DPE. Arg340 contacts substrate.

Belongs to the methylthioribose kinase family. Homodimer.

It carries out the reaction 5-(methylsulfanyl)-D-ribose + ATP = 5-(methylsulfanyl)-alpha-D-ribose 1-phosphate + ADP + H(+). The protein operates within amino-acid biosynthesis; L-methionine biosynthesis via salvage pathway; S-methyl-5-thio-alpha-D-ribose 1-phosphate from S-methyl-5'-thioadenosine (hydrolase route): step 2/2. Its function is as follows. Catalyzes the phosphorylation of methylthioribose into methylthioribose-1-phosphate. In Bacillus subtilis (strain 168), this protein is Methylthioribose kinase (mtnK).